The chain runs to 99 residues: Small ribosomal subunit protein bS20 (99 aa).

This sequence belongs to the bacterial ribosomal protein bS20 family.

Functionally, binds directly to 16S ribosomal RNA. In Picosynechococcus sp. (strain ATCC 27264 / PCC 7002 / PR-6) (Agmenellum quadruplicatum), this protein is Small ribosomal subunit protein bS20.